Reading from the N-terminus, the 105-residue chain is Ferredoxin--nitrite reductase, chloroplastic (105 aa).

Residues Cys28 and Cys32 each contribute to the [4Fe-4S] cluster site. Cys32 is a binding site for siroheme.

The protein belongs to the nitrite and sulfite reductase 4Fe-4S domain family. As to quaternary structure, monomer. Requires siroheme as cofactor. [4Fe-4S] cluster serves as cofactor. As to expression, highest expression in roots and hypocotyls. Some expression in cotyledonary whorls.

Its subcellular location is the plastid. The protein localises to the chloroplast. The enzyme catalyses 6 oxidized [2Fe-2S]-[ferredoxin] + NH4(+) + 2 H2O = nitrite + 6 reduced [2Fe-2S]-[ferredoxin] + 8 H(+). Its pathway is nitrogen metabolism; nitrate reduction (assimilation). In Pinus sylvestris (Scotch pine), this protein is Ferredoxin--nitrite reductase, chloroplastic (NIR).